Here is a 37-residue protein sequence, read N- to C-terminus: Large ribosomal subunit protein bL36c (37 aa).

It belongs to the bacterial ribosomal protein bL36 family.

The protein localises to the plastid. The protein resides in the chloroplast. The chain is Large ribosomal subunit protein bL36c (rpl36) from Pisum sativum (Garden pea).